The chain runs to 367 residues: Probable butyrate kinase (367 aa).

It belongs to the acetokinase family.

The protein localises to the cytoplasm. The catalysed reaction is butanoate + ATP = butanoyl phosphate + ADP. This is Probable butyrate kinase from Bacillus cytotoxicus (strain DSM 22905 / CIP 110041 / 391-98 / NVH 391-98).